The following is a 334-amino-acid chain: Ornithine carbamoyltransferase (334 aa).

Carbamoyl phosphate is bound by residues 57–60, Gln84, Arg108, and 135–138; these read STRT and HPTQ. L-ornithine contacts are provided by residues Asn169, Asp233, and 237–238; that span reads SM. Carbamoyl phosphate contacts are provided by residues 275–276 and Arg320; that span reads CL.

Belongs to the aspartate/ornithine carbamoyltransferase superfamily. OTCase family.

The protein localises to the cytoplasm. It catalyses the reaction carbamoyl phosphate + L-ornithine = L-citrulline + phosphate + H(+). Its pathway is amino-acid biosynthesis; L-arginine biosynthesis; L-arginine from L-ornithine and carbamoyl phosphate: step 1/3. Its function is as follows. Reversibly catalyzes the transfer of the carbamoyl group from carbamoyl phosphate (CP) to the N(epsilon) atom of ornithine (ORN) to produce L-citrulline. In Vibrio parahaemolyticus serotype O3:K6 (strain RIMD 2210633), this protein is Ornithine carbamoyltransferase.